The primary structure comprises 247 residues: LOB domain-containing protein 38 (247 aa).

One can recognise an LOB domain in the interval 1–107 (MSCNGCRVLR…VETVLRGGSL (107 aa)). Residues 157 to 170 (FSSSRSRSRSTASP) are compositionally biased toward low complexity. The segment at 157–184 (FSSSRSRSRSTASPPKRKRLSSEQQPSS) is disordered.

The protein belongs to the LOB domain-containing protein family. As to expression, expressed in young shoots, roots, stems, leaves and flowers.

The polypeptide is LOB domain-containing protein 38 (LBD38) (Arabidopsis thaliana (Mouse-ear cress)).